The chain runs to 507 residues: Cytochrome P450 4A14 (507 aa).

The propeptide at 1–4 is removed in mature form; the sequence is MGFS. Heme is bound at residue Glu318. At Ser437 the chain carries Phosphoserine. Cys454 contributes to the heme binding site.

This sequence belongs to the cytochrome P450 family. It depends on heme as a cofactor.

The protein resides in the endoplasmic reticulum membrane. It localises to the microsome membrane. It carries out the reaction an omega-methyl-long-chain fatty acid + reduced [NADPH--hemoprotein reductase] + O2 = an omega-hydroxy-long-chain fatty acid + oxidized [NADPH--hemoprotein reductase] + H2O + H(+). It catalyses the reaction dodecanoate + reduced [NADPH--hemoprotein reductase] + O2 = (11R)-hydroxydodecanoate + oxidized [NADPH--hemoprotein reductase] + H2O + H(+). The catalysed reaction is dodecanoate + reduced [NADPH--hemoprotein reductase] + O2 = 12-hydroxydodecanoate + oxidized [NADPH--hemoprotein reductase] + H2O + H(+). The enzyme catalyses tetradecanoate + reduced [NADPH--hemoprotein reductase] + O2 = 14-hydroxytetradecanoate + oxidized [NADPH--hemoprotein reductase] + H2O + H(+). Its pathway is lipid metabolism; fatty acid metabolism. A cytochrome P450 monooxygenase that catalyzes omega and omega-1 hydroxylation of saturated fatty acids. Exhibits preferential omega versus omega-1 regioselectivity and (R) versus (S) stereoselectivity for hydroxylation of dodecanoic (lauric) acid. Mechanistically, uses molecular oxygen inserting one oxygen atom into a substrate, and reducing the second into a water molecule, with two electrons provided by NADPH via cytochrome P450 reductase (CPR; NADPH-ferrihemoprotein reductase). The chain is Cytochrome P450 4A14 from Rattus norvegicus (Rat).